Consider the following 527-residue polypeptide: Protein disulfide-isomerase A2 (527 aa).

The N-terminal stretch at 1–20 (MDKQLLPVLLLLLGVSGSWG) is a signal peptide. Residues 20–41 (GQGEEPGGPSEVLPEEPTGEEV) form a disordered region. One can recognise a Thioredoxin 1 domain in the interval 29 to 155 (SEVLPEEPTG…IAEWLRRRVG (127 aa)). Catalysis depends on nucleophile residues C74 and C77. Cysteines 74 and 77 form a disulfide. 2 N-linked (GlcNAc...) asparagine glycosylation sites follow: N130 and N287. A Thioredoxin 2 domain is found at 355 to 499 (VIAITAASVA…FSKFLDSGGH (145 aa)). Catalysis depends on nucleophile residues C421 and C424. Residues C421 and C424 are joined by a disulfide bond. Residues 495–527 (DSGGHLPKEEPKEPAASAPEAQANSTLGPKEEL) form a disordered region. N518 carries N-linked (GlcNAc...) asparagine glycosylation. The short motif at 524-527 (KEEL) is the Prevents secretion from ER element.

The protein belongs to the protein disulfide isomerase family. As to quaternary structure, part of a large chaperone multiprotein complex comprising DNAJB11, HSP90B1, HSPA5, HYOU, PDIA2, PDIA4, PDIA6, PPIB, SDF2L1, UGGT1 and very small amounts of ERP29, but not, or at very low levels, CALR nor CANX. Glycosylated. In terms of tissue distribution, highly expressed in pancreas.

It is found in the endoplasmic reticulum lumen. The enzyme catalyses Catalyzes the rearrangement of -S-S- bonds in proteins.. Functionally, acts as an intracellular estrogen-binding protein. May be involved in modulating cellular levels and biological functions of estrogens in the pancreas. May act as a chaperone that inhibits aggregation of misfolded proteins. The chain is Protein disulfide-isomerase A2 from Mus musculus (Mouse).